Reading from the N-terminus, the 341-residue chain is MRLCLIPWNTGTPQRVLPPVVWSPPSRKKPVLSARNSRMFGYLSPVRIPRLRGKFNLQLPSLDEQVIPARLPKMEVRAEEPKEATEVKDQVQTQEQEDNKRGPCSNGEAASTSRPLETQGNLTSSWYNPRPLEGNVHLKSLTENNQTDKAQVHAVSFYSKGHGVASSHSPAGGILPFGKPDPLPTVLPAPVPGCSLWPEKAALKVLGKDHLPSSPGLLTVGEDMQPKDPAALGSSRSSPPRAAGHRSRKRKLSGPPLQLQPTPPLQLRWERDERPPPAKLPCLSPEALLVGQASQREGRLQQGNMRKNMRVLSRTSKFRRLRQLLRRRKKRQQVRSISACT.

The segment covering 78 to 89 has biased composition (basic and acidic residues); that stretch reads AEEPKEATEVKD. Disordered stretches follow at residues 78–131 and 216–282; these read AEEP…NPRP and GLLT…KLPC. A compositionally biased stretch (polar residues) spans 108–127; that stretch reads EAASTSRPLETQGNLTSSWY. The span at 243–252 shows a compositional bias: basic residues; sequence AGHRSRKRKL.

The protein belongs to the UPF0607 family.

The protein is Putative UPF0607 protein ENSP00000381514 of Homo sapiens (Human).